A 513-amino-acid chain; its full sequence is MKNSINASEVVNIIKEKVETFDNPIKRENIGEVISVTDGITLVYGLEKAKFGEKVSFASGVEGIVLDLDHDTAGIVVLGNDRDVKEGDVVKCSGDVVQVPVGHELLGRVVNALGDPIDDGGEIRAKNKMYIESKAPGIIDRKSVHEPLQTGIKIIDLLIPIGRGQRELIIGDRQIGKTTIAIDTIINQKKINDEVNENQKIYCVYVAIGQKISTVAKVVNKLKESGALEYTTVVVASASDCAPMQFLAPYTGCTIGEFFRDNGMHCLVVYDDLSKHAVAYRQMSLLLRRPPGREAYPGDIFYVHSRLLERAAKMSDEKGQGSLTALPIIETQAGDVSAYVPTNVISITDGQIFLESELFHKGFRPAVNIGLSVSRVGSAAQLKSVKKVAGSIKLSLAQYRELEDFAKFGSDLDATVQLSLNKGKYLIELLKQKQYSPMQIEEQVLLMYIFSNLYGQLNKVQVSNINRFECDLINYFQTVHPGVLKKLSGDMNDDIKDDILGIVSDFVTQFNCV.

171–178 (GDRQIGKT) serves as a coordination point for ATP.

This sequence belongs to the ATPase alpha/beta chains family. F-type ATPases have 2 components, CF(1) - the catalytic core - and CF(0) - the membrane proton channel. CF(1) has five subunits: alpha(3), beta(3), gamma(1), delta(1), epsilon(1). CF(0) has three main subunits: a(1), b(2) and c(9-12). The alpha and beta chains form an alternating ring which encloses part of the gamma chain. CF(1) is attached to CF(0) by a central stalk formed by the gamma and epsilon chains, while a peripheral stalk is formed by the delta and b chains.

Its subcellular location is the cell membrane. It carries out the reaction ATP + H2O + 4 H(+)(in) = ADP + phosphate + 5 H(+)(out). Produces ATP from ADP in the presence of a proton gradient across the membrane. The alpha chain is a regulatory subunit. The protein is ATP synthase subunit alpha of Wolbachia pipientis subsp. Culex pipiens (strain wPip).